Here is a 395-residue protein sequence, read N- to C-terminus: Dual specificity protein phosphatase 4 (395 aa).

V2 is modified (N-acetylvaline). The Rhodanese domain maps to 42–160 (SGGKCLLLDC…FSSEYPEFCS (119 aa)). A Tyrosine-protein phosphatase domain is found at 196–337 (GPVEILPFLY…LLQFESQVLT (142 aa)). Catalysis depends on C281, which acts as the Phosphocysteine intermediate. Phosphoserine; by MAPK is present on residues S387 and S392.

This sequence belongs to the protein-tyrosine phosphatase family. Non-receptor class dual specificity subfamily. In terms of assembly, hollow spherical complex composed of 24 subunits with pseudooctahedral symmetry, has a tetramer as the basic unit. Phosphorylation in the C-terminus by ERK1/2 inhibits proteasomal degradation and stabilizes the protein. Expressed at moderate levels in nearly all tissues and cells including brain, spleen, and testes with the higher expression in the heart and lung and lower expression in skeletal muscle and kidney. Undetectable in liver. Expressed in many areas of the brain with very strong expression in the hippocampus, piriform cortex, and the suprachiasmatic nucleus.

Its subcellular location is the nucleus. It catalyses the reaction O-phospho-L-tyrosyl-[protein] + H2O = L-tyrosyl-[protein] + phosphate. It carries out the reaction O-phospho-L-seryl-[protein] + H2O = L-seryl-[protein] + phosphate. The enzyme catalyses O-phospho-L-threonyl-[protein] + H2O = L-threonyl-[protein] + phosphate. Functionally, regulates mitogenic signal transduction by dephosphorylating both Thr and Tyr residues on MAP kinases ERK1 and ERK2. In Rattus norvegicus (Rat), this protein is Dual specificity protein phosphatase 4 (Dusp4).